Reading from the N-terminus, the 205-residue chain is LexA repressor (205 aa).

The H-T-H motif DNA-binding region spans 28–48 (RAEIAKRLGFKSANAAEEHLK). Active-site for autocatalytic cleavage activity residues include Ser122 and Lys159.

This sequence belongs to the peptidase S24 family. Homodimer.

The catalysed reaction is Hydrolysis of Ala-|-Gly bond in repressor LexA.. Functionally, represses a number of genes involved in the response to DNA damage (SOS response), including recA and lexA. In the presence of single-stranded DNA, RecA interacts with LexA causing an autocatalytic cleavage which disrupts the DNA-binding part of LexA, leading to derepression of the SOS regulon and eventually DNA repair. The polypeptide is LexA repressor (Shewanella woodyi (strain ATCC 51908 / MS32)).